A 706-amino-acid polypeptide reads, in one-letter code: Protein argonaute (706 aa).

Positions 1–108 are N-terminal domain; that stretch reads MGKEALLNLY…ELFRDFLTKT (108 aa). Residues 109-165 are linker L1; sequence KVKDKFISDFYKKFRDKITVQGKNRKIALIPEVNEKVLKSEEGYFLLHLDLKFRIQP. The 92-residue stretch at 168-259 folds into the PAZ domain; the sequence is TLQTLLERND…YPATILKPVL (92 aa). The linker L2 stretch occupies residues 263–334; sequence NLEDEERNEV…AKGKNTKVIT (72 aa). A mid domain region spans residues 335 to 448; sequence NLRKFLELCR…YDFVKRELLK (114 aa). A Piwi domain is found at 419 to 694; the sequence is LVIVFLEEYP…ITKLMLRGIE (276 aa). The PIWI domain stretch occupies residues 449-706; sequence KMIPSQVILN…KKEGDIMYWL (258 aa). Residues Asp502, Glu541, and Asp571 contribute to the active site. Asp502 contributes to the Mn(2+) binding site. Residue Asp571 coordinates Mn(2+). The segment at 612 to 650 is PIWI box; sequence FIKGYFYKLSEDSVILATYNQVYEGTHQPIKVRKVYGEL. The active site involves Asp683. Asp683 is a binding site for Mn(2+).

Belongs to the argonaute family. Long pAgo subfamily. The cofactor is Mg(2+).

Functionally, a DNA-guided RNA endonuclease. Uses short ssDNA sequences as guides (gDNA) to bind complementary target strands, resulting in cleavage of the target RNA. The cleavage site is 10 nucleotides downstream of the residue base paired with the 5'-end of the gDNA. Binds ssDNA better than ssRNA, binds dsDNA and DNA-RNA hybrids but does not bind dsRNA. A 2 nucleotide 3'-overhang (possibly on the guide strand) may help load nucleic acids into the complex. The protein is Protein argonaute of Aquifex aeolicus (strain VF5).